The chain runs to 165 residues: Destrin (165 aa).

Residue A2 is modified to N-acetylalanine. S3 is subject to Phosphoserine. An ADF-H domain is found at 4–153; sequence GVQVADEVCR…NRACIAEKLG (150 aa). The residue at position 19 (K19) is an N6-acetyllysine. Positions 30 to 34 match the Nuclear localization signal motif; sequence KKRKK.

Belongs to the actin-binding proteins ADF family. Post-translationally, ISGylated.

Functionally, actin-depolymerizing protein. Severs actin filaments (F-actin) and binds to actin monomers (G-actin). Acts in a pH-independent manner. In Bos taurus (Bovine), this protein is Destrin (DSTN).